The chain runs to 243 residues: GTP cyclohydrolase 1 (243 aa).

T15 is modified (phosphothreonine). Residues 18–55 are disordered; it reads NIRPTSPYTLNPPVERDGFSWPSVGTRQRAEETEEEEK. The residue at position 23 (S23) is a Phosphoserine. Zn(2+)-binding residues include C132, H135, and C203.

Belongs to the GTP cyclohydrolase I family. Homodimer.

The catalysed reaction is GTP + H2O = 7,8-dihydroneopterin 3'-triphosphate + formate + H(+). It functions in the pathway cofactor biosynthesis; 7,8-dihydroneopterin triphosphate biosynthesis; 7,8-dihydroneopterin triphosphate from GTP: step 1/1. In terms of biological role, GTP cyclohydrolase 1 is the first enzyme in the biosynthetic pathway leading to folic acid. This chain is GTP cyclohydrolase 1, found in Saccharomyces cerevisiae (strain ATCC 204508 / S288c) (Baker's yeast).